Here is a 476-residue protein sequence, read N- to C-terminus: Aspartyl/glutamyl-tRNA(Asn/Gln) amidotransferase subunit B (476 aa).

The protein belongs to the GatB/GatE family. GatB subfamily. As to quaternary structure, heterotrimer of A, B and C subunits.

It catalyses the reaction L-glutamyl-tRNA(Gln) + L-glutamine + ATP + H2O = L-glutaminyl-tRNA(Gln) + L-glutamate + ADP + phosphate + H(+). The catalysed reaction is L-aspartyl-tRNA(Asn) + L-glutamine + ATP + H2O = L-asparaginyl-tRNA(Asn) + L-glutamate + ADP + phosphate + 2 H(+). Allows the formation of correctly charged Asn-tRNA(Asn) or Gln-tRNA(Gln) through the transamidation of misacylated Asp-tRNA(Asn) or Glu-tRNA(Gln) in organisms which lack either or both of asparaginyl-tRNA or glutaminyl-tRNA synthetases. The reaction takes place in the presence of glutamine and ATP through an activated phospho-Asp-tRNA(Asn) or phospho-Glu-tRNA(Gln). In Lactobacillus johnsonii (strain CNCM I-12250 / La1 / NCC 533), this protein is Aspartyl/glutamyl-tRNA(Asn/Gln) amidotransferase subunit B.